The sequence spans 248 residues: Phosphoribosylformylglycinamidine synthase subunit PurQ (248 aa).

The Glutamine amidotransferase type-1 domain maps to 6–248 (AMVLRMEGTN…IFFRILYNST (243 aa)). C95 serves as the catalytic Nucleophile. Residues H215 and E217 contribute to the active site.

As to quaternary structure, part of the FGAM synthase complex composed of 1 PurL, 1 PurQ and 2 PurS subunits.

Its subcellular location is the cytoplasm. It carries out the reaction N(2)-formyl-N(1)-(5-phospho-beta-D-ribosyl)glycinamide + L-glutamine + ATP + H2O = 2-formamido-N(1)-(5-O-phospho-beta-D-ribosyl)acetamidine + L-glutamate + ADP + phosphate + H(+). The catalysed reaction is L-glutamine + H2O = L-glutamate + NH4(+). Its pathway is purine metabolism; IMP biosynthesis via de novo pathway; 5-amino-1-(5-phospho-D-ribosyl)imidazole from N(2)-formyl-N(1)-(5-phospho-D-ribosyl)glycinamide: step 1/2. Functionally, part of the phosphoribosylformylglycinamidine synthase complex involved in the purines biosynthetic pathway. Catalyzes the ATP-dependent conversion of formylglycinamide ribonucleotide (FGAR) and glutamine to yield formylglycinamidine ribonucleotide (FGAM) and glutamate. The FGAM synthase complex is composed of three subunits. PurQ produces an ammonia molecule by converting glutamine to glutamate. PurL transfers the ammonia molecule to FGAR to form FGAM in an ATP-dependent manner. PurS interacts with PurQ and PurL and is thought to assist in the transfer of the ammonia molecule from PurQ to PurL. This chain is Phosphoribosylformylglycinamidine synthase subunit PurQ, found in Picrophilus torridus (strain ATCC 700027 / DSM 9790 / JCM 10055 / NBRC 100828 / KAW 2/3).